The sequence spans 194 residues: tRNA (pseudouridine(54)-N(1))-methyltransferase (194 aa).

Leucine 125 contacts S-adenosyl-L-methionine.

It belongs to the methyltransferase superfamily. TrmY family. As to quaternary structure, homodimer.

The protein resides in the cytoplasm. The catalysed reaction is pseudouridine(54) in tRNA + S-adenosyl-L-methionine = N(1)-methylpseudouridine(54) in tRNA + S-adenosyl-L-homocysteine + H(+). In terms of biological role, specifically catalyzes the N1-methylation of pseudouridine at position 54 (Psi54) in tRNAs. This Methanospirillum hungatei JF-1 (strain ATCC 27890 / DSM 864 / NBRC 100397 / JF-1) protein is tRNA (pseudouridine(54)-N(1))-methyltransferase.